The chain runs to 747 residues: Asparagine synthetase [glutamine-hydrolyzing] 2 (747 aa).

Cysteine 2 functions as the For GATase activity in the catalytic mechanism. The 217-residue stretch at 2–218 (CGLAGIINLA…AGHYLEINLT (217 aa)) folds into the Glutamine amidotransferase type-2 domain. Residues 52-56 (RLSIL), 77-79 (NGE), and aspartate 100 contribute to the L-glutamine site. 395 to 396 (SP) is a binding site for ATP.

Belongs to the asparagine synthetase family.

It carries out the reaction L-aspartate + L-glutamine + ATP + H2O = L-asparagine + L-glutamate + AMP + diphosphate + H(+). The protein operates within amino-acid biosynthesis; L-asparagine biosynthesis; L-asparagine from L-aspartate (L-Gln route): step 1/1. This is Asparagine synthetase [glutamine-hydrolyzing] 2 (asnH) from Bacillus subtilis (strain 168).